Reading from the N-terminus, the 256-residue chain is Hydroxyacylglutathione hydrolase (256 aa).

Zn(2+) is bound by residues His54, His56, Asp58, His59, His113, Asp136, and His174.

The protein belongs to the metallo-beta-lactamase superfamily. Glyoxalase II family. In terms of assembly, monomer. The cofactor is Zn(2+).

The catalysed reaction is an S-(2-hydroxyacyl)glutathione + H2O = a 2-hydroxy carboxylate + glutathione + H(+). It participates in secondary metabolite metabolism; methylglyoxal degradation; (R)-lactate from methylglyoxal: step 2/2. Functionally, thiolesterase that catalyzes the hydrolysis of S-D-lactoyl-glutathione to form glutathione and D-lactic acid. This is Hydroxyacylglutathione hydrolase from Cyanothece sp. (strain PCC 7425 / ATCC 29141).